We begin with the raw amino-acid sequence, 217 residues long: Probable transaldolase (217 aa).

Catalysis depends on lysine 83, which acts as the Schiff-base intermediate with substrate.

Belongs to the transaldolase family. Type 3B subfamily.

The protein resides in the cytoplasm. The enzyme catalyses D-sedoheptulose 7-phosphate + D-glyceraldehyde 3-phosphate = D-erythrose 4-phosphate + beta-D-fructose 6-phosphate. It participates in carbohydrate degradation; pentose phosphate pathway; D-glyceraldehyde 3-phosphate and beta-D-fructose 6-phosphate from D-ribose 5-phosphate and D-xylulose 5-phosphate (non-oxidative stage): step 2/3. Functionally, transaldolase is important for the balance of metabolites in the pentose-phosphate pathway. The polypeptide is Probable transaldolase (Roseobacter denitrificans (strain ATCC 33942 / OCh 114) (Erythrobacter sp. (strain OCh 114))).